Here is a 330-residue protein sequence, read N- to C-terminus: 4,5-dihydroxyphthalate decarboxylase (330 aa).

To P.putida DHP decarboxylase.

It catalyses the reaction 4,5-dihydroxyphthalate + H(+) = 3,4-dihydroxybenzoate + CO2. It functions in the pathway xenobiotic degradation; phthalate degradation; 3,4-dihydroxybenzoate from phthalate: step 3/3. The polypeptide is 4,5-dihydroxyphthalate decarboxylase (phtD) (Comamonas testosteroni (Pseudomonas testosteroni)).